The primary structure comprises 947 residues: Bifunctional glutamine synthetase adenylyltransferase/adenylyl-removing enzyme (947 aa).

Residues 1 to 440 (MTPLSSPLSQ…VFNELIGDDE (440 aa)) form an adenylyl removase region. Residues 450–947 (SEPWREVWQD…ASWRKWLVAV (498 aa)) are adenylyl transferase.

The protein belongs to the GlnE family. The cofactor is Mg(2+).

It carries out the reaction [glutamine synthetase]-O(4)-(5'-adenylyl)-L-tyrosine + phosphate = [glutamine synthetase]-L-tyrosine + ADP. The catalysed reaction is [glutamine synthetase]-L-tyrosine + ATP = [glutamine synthetase]-O(4)-(5'-adenylyl)-L-tyrosine + diphosphate. Functionally, involved in the regulation of glutamine synthetase GlnA, a key enzyme in the process to assimilate ammonia. When cellular nitrogen levels are high, the C-terminal adenylyl transferase (AT) inactivates GlnA by covalent transfer of an adenylyl group from ATP to specific tyrosine residue of GlnA, thus reducing its activity. Conversely, when nitrogen levels are low, the N-terminal adenylyl removase (AR) activates GlnA by removing the adenylyl group by phosphorolysis, increasing its activity. The regulatory region of GlnE binds the signal transduction protein PII (GlnB) which indicates the nitrogen status of the cell. This is Bifunctional glutamine synthetase adenylyltransferase/adenylyl-removing enzyme from Salmonella typhimurium (strain LT2 / SGSC1412 / ATCC 700720).